An 81-amino-acid polypeptide reads, in one-letter code: Protein L83L (81 aa).

The segment at 1–28 is disordered; the sequence is MDTSLKNNDGALDADNKNYQDYKDEPDK. Positions 14–28 are enriched in basic and acidic residues; the sequence is ADNKNYQDYKDEPDK.

It belongs to the asfivirus L83L family. Interacts with host IL1B.

Its subcellular location is the host cytoplasm. Its function is as follows. May subvert the host innate immune response by interacting with host IL1B and interfering with its function. The chain is Protein L83L from African swine fever virus (isolate Tick/South Africa/Pretoriuskop Pr4/1996) (ASFV).